The following is a 542-amino-acid chain: MEKDTKQVDIIFRSKLPDIYIPNHLPLHSYCFENISEFSSRPCLINGANKQIYTYADVELNSRKVAAGLHKQGIQPKDTIMILLPNSPEFVFAFIGASYLGAISTMANPLFTPAEVVKQAKASSAKIIVTQACHVNKVKDYAFENDVKIICIDSAPEGCLHFSVLTQANEHDIPEVEIQPDDVVALPYSSGTTGLPKGVMLTHKGLVTSVAQQVDGENPNLYIHSEDVMLCVLPLFHIYSLNSVLLCGLRVGAAILIMQKFDIVSFLELIQRYKVTIGPFVPPIVLAIAKSPMVDDYDLSSVRTVMSGAAPLGKELEDTVRAKFPNAKLGQGYGMTEAGPVLAMCLAFAKEPFEIKSGACGTVVRNAEMKIVDPKTGNSLPRNQSGEICIRGDQIMKGYLNDPEATARTIDKEGWLYTGDIGYIDDDDELFIVDRLKELIKYKGFQVAPAELEALLLNHPNISDAAVVPMKDEQAGEVPVAFVVRSNGSTITEDEVKDFISKQVIFYKRIKRVFFVDAIPKSPSGKILRKDLRAKLAAGLPN.

6 residues coordinate ATP: S189, S190, G191, T192, T193, and K197. (E)-4-coumaroyl-AMP contacts are provided by Y239 and S243. Residues Y239 and S243 each coordinate (E)-caffeoyl-AMP. The (E)-feruloyl-AMP site is built by Y239 and S243. Residue K260 coordinates CoA. The segment at 262 to 331 (DIVSFLELIQ…AKFPNAKLGQ (70 aa)) is SBD1. Residue A309 coordinates (E)-4-coumaroyl-AMP. Residue A309 coordinates (E)-caffeoyl-AMP. A309 is a (E)-feruloyl-AMP binding site. ATP contacts are provided by Q331, G332, and T336. 7 residues coordinate (E)-4-coumaroyl-AMP: G332, T336, M344, D420, R435, K437, and K441. 7 residues coordinate (E)-caffeoyl-AMP: G332, T336, M344, D420, R435, K437, and K441. (E)-feruloyl-AMP-binding residues include G332, T336, M344, D420, R435, K437, and K441. The AMP site is built by G332 and T336. An SBD2 region spans residues 332–399 (GYGMTEAGPV…IRGDQIMKGY (68 aa)). ATP is bound by residues D420 and R435. D420 contributes to the AMP binding site. The AMP site is built by K437 and K441. The CoA site is built by K443 and G444. Q446 contributes to the AMP binding site. Residue K526 coordinates ATP.

Belongs to the ATP-dependent AMP-binding enzyme family. Mg(2+) is required as a cofactor. As to expression, mainly expressed in old stems and, to a lower extent, in flowers (e.g. in ovary), leaves, young stems, shoot tips and patel limbs.

The catalysed reaction is (E)-4-coumarate + ATP + CoA = (E)-4-coumaroyl-CoA + AMP + diphosphate. The enzyme catalyses (E)-caffeate + ATP + CoA = (E)-caffeoyl-CoA + AMP + diphosphate. It carries out the reaction (E)-ferulate + ATP + CoA = (E)-feruloyl-CoA + AMP + diphosphate. It catalyses the reaction (E)-cinnamate + ATP + CoA = (E)-cinnamoyl-CoA + AMP + diphosphate. The catalysed reaction is (E)-4-coumarate + ATP + H(+) = (E)-4-coumaroyl-AMP + diphosphate. The enzyme catalyses (E)-4-coumaroyl-AMP + CoA = (E)-4-coumaroyl-CoA + AMP + H(+). It carries out the reaction (E)-caffeate + ATP + H(+) = (E)-caffeoyl-AMP + diphosphate. It catalyses the reaction (E)-caffeoyl-AMP + CoA = (E)-caffeoyl-CoA + AMP + H(+). The catalysed reaction is (E)-ferulate + ATP + H(+) = (E)-feruloyl-AMP + diphosphate. The enzyme catalyses (E)-feruloyl-AMP + CoA = (E)-feruloyl-CoA + AMP + H(+). It participates in phytoalexin biosynthesis; 3,4',5-trihydroxystilbene biosynthesis; 3,4',5-trihydroxystilbene from trans-4-coumarate: step 1/2. Functionally, major enzyme of the phenylpropanoid pathway that mediates the production of several precursors for numerous metabolites and regulates carbon flow. Catalyzes the formation of CoA thioesters using 4-coumarate, ferulate, caffeate, and cinnamate as substrates. Follows a two-step reaction mechanism, wherein a (hydroxy)cinnamate substrate first undergoes adenylation by ATP leading to an acyl-AMP, followed by a thioesterification in the presence of CoA to yield the final (hydroxy)cinnamoyl-CoA product. Almost inactive toward sinapate. The chain is 4-coumarate--CoA ligase 2 from Nicotiana tabacum (Common tobacco).